The following is a 177-amino-acid chain: Cytochrome c-type biogenesis protein CcmE (177 aa).

Residues 1 to 7 are Cytoplasmic-facing; that stretch reads MTRKSRR. A helical; Signal-anchor for type II membrane protein membrane pass occupies residues 8-28; that stretch reads LILIAACGAVLALALGLILSA. Over 29–177 the chain is Periplasmic; sequence MSGSIVFFRS…DATLGQRSER (149 aa). Positions 122 and 126 each coordinate heme. Positions 133–177 are disordered; it reads DALKAQGRWQEGGSKEAPKDASKAAPKDAAKPETADATLGQRSER. Residues 145–166 are compositionally biased toward basic and acidic residues; that stretch reads GSKEAPKDASKAAPKDAAKPET.

The protein belongs to the CcmE/CycJ family.

Its subcellular location is the cell inner membrane. Heme chaperone required for the biogenesis of c-type cytochromes. Transiently binds heme delivered by CcmC and transfers the heme to apo-cytochromes in a process facilitated by CcmF and CcmH. This is Cytochrome c-type biogenesis protein CcmE from Methylorubrum extorquens (strain PA1) (Methylobacterium extorquens).